Here is a 489-residue protein sequence, read N- to C-terminus: Rhamnulokinase (489 aa).

Residue 13–17 (ASSGR) participates in ATP binding. An intrachain disulfide couples C68 to C222. Substrate is bound by residues G83 and 236-238 (HDT). D237 serves as the catalytic Proton acceptor. Position 259 (T259) interacts with ATP. N296 lines the substrate pocket. An ATP-binding site is contributed by Q304. An intrachain disulfide couples C353 to C370. Residue G402 coordinates ATP. Cysteines 413 and 417 form a disulfide.

This sequence belongs to the rhamnulokinase family. As to quaternary structure, monomer. Mg(2+) is required as a cofactor.

It catalyses the reaction L-rhamnulose + ATP = L-rhamnulose 1-phosphate + ADP + H(+). It functions in the pathway carbohydrate degradation; L-rhamnose degradation; glycerone phosphate from L-rhamnose: step 2/3. In terms of biological role, involved in the catabolism of L-rhamnose (6-deoxy-L-mannose). Catalyzes the transfer of the gamma-phosphate group from ATP to the 1-hydroxyl group of L-rhamnulose to yield L-rhamnulose 1-phosphate. The protein is Rhamnulokinase of Escherichia coli O9:H4 (strain HS).